The chain runs to 499 residues: Glycerol kinase (499 aa).

T13 is a binding site for ADP. The ATP site is built by T13, T14, and S15. Sn-glycerol 3-phosphate is bound at residue T13. R17 contributes to the ADP binding site. Residues R83, E84, Y135, and D245 each coordinate sn-glycerol 3-phosphate. The glycerol site is built by R83, E84, Y135, D245, and Q246. Positions 267 and 310 each coordinate ADP. The ATP site is built by T267, G310, Q314, and A411. ADP is bound by residues A411 and N415.

This sequence belongs to the FGGY kinase family.

The enzyme catalyses glycerol + ATP = sn-glycerol 3-phosphate + ADP + H(+). It participates in polyol metabolism; glycerol degradation via glycerol kinase pathway; sn-glycerol 3-phosphate from glycerol: step 1/1. Inhibited by fructose 1,6-bisphosphate (FBP). In terms of biological role, key enzyme in the regulation of glycerol uptake and metabolism. Catalyzes the phosphorylation of glycerol to yield sn-glycerol 3-phosphate. This Xylella fastidiosa (strain 9a5c) protein is Glycerol kinase.